Consider the following 308-residue polypeptide: Coenzyme PQQ synthesis protein B (308 aa).

The protein belongs to the PqqB family.

It participates in cofactor biosynthesis; pyrroloquinoline quinone biosynthesis. In terms of biological role, may be involved in the transport of PQQ or its precursor to the periplasm. The polypeptide is Coenzyme PQQ synthesis protein B (Klebsiella pneumoniae (strain 342)).